The following is a 278-amino-acid chain: Dehydrogenase/reductase SDR family member 4 (278 aa).

Position 36 to 60 (36 to 60 (LVTASTDGIGFAIARRLAQDGAHVV)) interacts with NADP(+). Residue K92 is modified to N6-acetyllysine; alternate. K92 carries the post-translational modification N6-succinyllysine; alternate. At K105 the chain carries N6-acetyllysine. The residue at position 140 (I140) is a Phosphoserine. Residue S169 participates in substrate binding. The active-site Proton acceptor is the Y182. K186 contacts NADP(+). Position 216 is an N6-acetyllysine; alternate (K216). Position 216 is an N6-succinyllysine; alternate (K216). S220 bears the Phosphoserine mark. An N6-succinyllysine mark is found at K227 and K234. A Peroxisomal targeting signal motif is present at residues 276–278 (SRL).

This sequence belongs to the short-chain dehydrogenases/reductases (SDR) family. As to quaternary structure, homotetramer. Predominantly expressed in normal cervix (at protein level). As to expression, expressed in some neoplastic cervical tissues, but not in normal cervix (at protein level). In terms of tissue distribution, expressed in a few neoplastic cervical tissues. High expression in liver.

It localises to the peroxisome. Its subcellular location is the nucleus. The enzyme catalyses a secondary alcohol + NADP(+) = a ketone + NADPH + H(+). The catalysed reaction is 3beta-hydroxy-5beta-pregnane-20-one + NADP(+) = 5beta-pregnan-3,20-dione + NADPH + H(+). It catalyses the reaction 5beta-dihydrotestosterone + NADPH + H(+) = 5beta-androstane-3beta,17beta-diol + NADP(+). It carries out the reaction 5beta-androstane-3,17-dione + NADPH + H(+) = 3beta-hydroxy-5beta-androstane-17-one + NADP(+). The enzyme catalyses isatin + NADPH + H(+) = 3-hydroxyindolin-2-one + NADP(+). The catalysed reaction is lithocholate + NADP(+) = 3-oxo-5beta-cholan-24-oate + NADPH + H(+). It catalyses the reaction 3-oxo-5beta-cholan-24-oate + NADPH + H(+) = isolithocholate + NADP(+). Inhibited by flavonoids (quercetin and genistein), cetylpyridium chloride, phenylhexane and valproic acid. Low inhibition is observed with fatty acids (myristic acid and lauric acid). No significant inhibition is observed with barbital, dicumarol, indomethacin, metyrapone, ethacrynic acid, disulfiram, hexestrol and benzodiazepines (diazepam and nitrazepam). NADPH-dependent oxidoreductase which catalyzes the reduction of a variety of compounds bearing carbonyl groups including ketosteroids, alpha-dicarbonyl compounds, aldehydes, aromatic ketones and quinones. Reduces 3-ketosteroids and benzil into 3beta-hydroxysteroids and R-benzoin, respectively, in contrast to the stereoselectivity of non-primate DHRS4s which produce 3alpha-hydroxysteroids and S-benzoin. Diplays low activity toward all-trans-retinal and no activity toward 9-cis-retinal as compared to non-primate mammals. In the reverse reaction, catalyze the NAD-dependent oxidation of 3beta-hydroxysteroids and alcohol, but with much lower efficiency. Involved in the metabolism of 3beta-hydroxysteroids, isatin and xenobiotic carbonyl compounds. Functionally, no detected catalytic activity in vitro, possibly due to the lack of catalytic site. Its function is as follows. NADPH-dependent oxidoreductase which catalyzes the reduction of a variety of compounds bearing carbonyl groups including ketosteroids, alpha-dicarbonyl compounds, aldehydes, aromatic ketones and quinones. Involved in the metabolism of 3beta-hydroxysteroids, isatin and xenobiotic carbonyl compounds. Has a higher catalytic activity for xenobiotic alpha-dicarbonyl compounds, sucha as benzil, than isoform 1 and is involved in benzil detoxification. The polypeptide is Dehydrogenase/reductase SDR family member 4 (Homo sapiens (Human)).